The chain runs to 310 residues: Methionyl-tRNA formyltransferase (310 aa).

(6S)-5,6,7,8-tetrahydrofolate is bound at residue 109–112 (SLLP).

Belongs to the Fmt family.

The catalysed reaction is L-methionyl-tRNA(fMet) + (6R)-10-formyltetrahydrofolate = N-formyl-L-methionyl-tRNA(fMet) + (6S)-5,6,7,8-tetrahydrofolate + H(+). Attaches a formyl group to the free amino group of methionyl-tRNA(fMet). The formyl group appears to play a dual role in the initiator identity of N-formylmethionyl-tRNA by promoting its recognition by IF2 and preventing the misappropriation of this tRNA by the elongation apparatus. The chain is Methionyl-tRNA formyltransferase from Pseudomonas putida (strain GB-1).